The primary structure comprises 467 residues: MHCVLARILLWFLIVDLSVIRALVLPPLKDYDPLEPLMKRDMAMGQRNRFKVDGQLPPILNSTDVTDDQRSLHTPGEIPSYVINHCPLVHLYSEEKYWPSDIAEYVQNFQIKDKNGNSISTHENLTLHDLKAEYHVDLFGNKTETHIPSSEVFLTSLDDFDKDPKWLLGHLPEYGTGYNSKAPAILIVVDKGNGWVDAFWFFFYPFNHGPFIMGHGPWGNHVGDWEHSLVRFYKGIPKYLWMSAHSSGTGYRYEAVEKFKKLRKRKQQDSDDGGDTILERPLIFSARGTHANYASAGQHAHDIPFFFMPLSDFTDRGPLWDPSLNFYSYTFDGKTVTPSSEREESLGLDWLHFQGGWGDQQLPARDPRQKWCVAQWKYIGGPRGPLFKKLDRLNLCGGVKKWNFWNGGCPARRLIKKAEGLDSESTDLMGDNCGVLLYRIRPKWLRGILRFLMWRGILCSLMEFFTN.

A helical transmembrane segment spans residues 8 to 28; the sequence is ILLWFLIVDLSVIRALVLPPL. 3 N-linked (GlcNAc...) asparagine glycosylation sites follow: Asn-61, Asn-124, and Asn-141.

This sequence belongs to the VPS62 family.

The protein resides in the membrane. In terms of biological role, involved in vacuolar protein sorting. This is Putative vacuolar protein sorting-associated protein TDA6 (TDA6) from Saccharomyces cerevisiae (strain ATCC 204508 / S288c) (Baker's yeast).